We begin with the raw amino-acid sequence, 64 residues long: MGNIRETNIKRTAFSLIENYGEVFTKDFETNKALVTKYTTIESKIIRNRVAGYVTRKVARMKVY.

Belongs to the eukaryotic ribosomal protein eS17 family.

This is Small ribosomal subunit protein eS17 from Methanosarcina mazei (strain ATCC BAA-159 / DSM 3647 / Goe1 / Go1 / JCM 11833 / OCM 88) (Methanosarcina frisia).